We begin with the raw amino-acid sequence, 36 residues long: Photosystem II reaction center protein M (36 aa).

A helical transmembrane segment spans residues 5–25 (ILGVIAVALFILIPTSFLLIL).

It belongs to the PsbM family. As to quaternary structure, PSII is composed of 1 copy each of membrane proteins PsbA, PsbB, PsbC, PsbD, PsbE, PsbF, PsbH, PsbI, PsbJ, PsbK, PsbL, PsbM, PsbT, PsbY, PsbZ, Psb30/Ycf12, at least 3 peripheral proteins of the oxygen-evolving complex and a large number of cofactors. It forms dimeric complexes.

The protein resides in the plastid. Its subcellular location is the chloroplast thylakoid membrane. One of the components of the core complex of photosystem II (PSII). PSII is a light-driven water:plastoquinone oxidoreductase that uses light energy to abstract electrons from H(2)O, generating O(2) and a proton gradient subsequently used for ATP formation. It consists of a core antenna complex that captures photons, and an electron transfer chain that converts photonic excitation into a charge separation. This subunit is found at the monomer-monomer interface. The polypeptide is Photosystem II reaction center protein M (Bigelowiella natans (Pedinomonas minutissima)).